The following is a 405-amino-acid chain: Splicing factor 45 (405 aa).

The residue at position 2 (Ser2) is an N-acetylserine. Phosphoserine is present on Ser2. Lys15 is covalently cross-linked (Glycyl lysine isopeptide (Lys-Gly) (interchain with G-Cter in SUMO2)). At Lys21 the chain carries N6-acetyllysine. Glycyl lysine isopeptide (Lys-Gly) (interchain with G-Cter in SUMO2) cross-links involve residues Lys24 and Lys33. Lys41 is subject to N6-acetyllysine; alternate. Residue Lys41 forms a Glycyl lysine isopeptide (Lys-Gly) (interchain with G-Cter in SUMO2); alternate linkage. The span at Leu57–Ile68 shows a compositional bias: basic and acidic residues. Disordered regions lie at residues Leu57 to Ser88 and Arg114 to Asn233. A Glycyl lysine isopeptide (Lys-Gly) (interchain with G-Cter in SUMO2) cross-link involves residue Lys58. Thr71 carries the post-translational modification Phosphothreonine. A compositionally biased stretch (basic and acidic residues) spans Arg114–Pro153. 2 positions are modified to phosphoserine: Ser155 and Ser169. Residues Val182 to Pro200 show a composition bias toward basic and acidic residues. At Ser222 the chain carries Phosphoserine. The region spanning Gly235–Thr283 is the G-patch domain. At Thr237 the chain carries Phosphothreonine. Residue Lys256 forms a Glycyl lysine isopeptide (Lys-Gly) (interchain with G-Cter in SUMO2) linkage. A Phosphoserine modification is found at Ser266. Lys276 is covalently cross-linked (Glycyl lysine isopeptide (Lys-Gly) (interchain with G-Cter in SUMO2)). A phosphoserine mark is found at Ser295 and Ser297. In terms of domain architecture, RRM spans Val310–Cys389.

Binds SXL. Associates with the spliceosome. Interacts with SF3B1, SF1 and U2AF2.

It localises to the nucleus. Functionally, splice factor that binds to the single-stranded 3'AG at the exon/intron border and promotes its utilization in the second catalytic step. Involved in the regulation of alternative splicing and the utilization of cryptic splice sites. In Mus musculus (Mouse), this protein is Splicing factor 45 (Rbm17).